The primary structure comprises 435 residues: Phosphomethylpyrimidine synthase (435 aa).

Residues Asn-67, Met-96, Tyr-125, His-163, 185-187 (SRG), 226-229 (DGLR), and Glu-265 contribute to the substrate site. His-269 contacts Zn(2+). Position 292 (Tyr-292) interacts with substrate. His-333 is a binding site for Zn(2+). The [4Fe-4S] cluster site is built by Cys-408, Cys-411, and Cys-415.

The protein belongs to the ThiC family. The cofactor is [4Fe-4S] cluster.

The enzyme catalyses 5-amino-1-(5-phospho-beta-D-ribosyl)imidazole + S-adenosyl-L-methionine = 4-amino-2-methyl-5-(phosphooxymethyl)pyrimidine + CO + 5'-deoxyadenosine + formate + L-methionine + 3 H(+). Its pathway is cofactor biosynthesis; thiamine diphosphate biosynthesis. In terms of biological role, catalyzes the synthesis of the hydroxymethylpyrimidine phosphate (HMP-P) moiety of thiamine from aminoimidazole ribotide (AIR) in a radical S-adenosyl-L-methionine (SAM)-dependent reaction. The chain is Phosphomethylpyrimidine synthase from Thermus thermophilus (strain ATCC 27634 / DSM 579 / HB8).